The following is a 136-amino-acid chain: Histone H3.1t (136 aa).

Positions 1–43 (MARTKQTARKSTGGKAPRKQLATKVARKSAPATGGVKKPHRYR) are disordered. R3 carries the asymmetric dimethylarginine; by PRMT6; alternate modification. Position 3 is a citrulline; alternate (R3). The residue at position 4 (T4) is a Phosphothreonine; by HASPIN. An Allysine; alternate modification is found at K5. K5 carries the post-translational modification N6,N6,N6-trimethyllysine; alternate. At K5 the chain carries N6,N6-dimethyllysine; alternate. Residue K5 is modified to N6-(2-hydroxyisobutyryl)lysine; alternate. N6-(beta-hydroxybutyryl)lysine; alternate is present on K5. K5 carries the post-translational modification N6-acetyllysine; alternate. N6-methyllysine; alternate is present on K5. Q6 bears the 5-glutamyl dopamine; alternate mark. Q6 is subject to 5-glutamyl serotonin; alternate. Phosphothreonine; by PKC is present on T7. Position 9 is a citrulline; alternate (R9). R9 is modified (symmetric dimethylarginine; by PRMT5; alternate). K10 bears the N6,N6,N6-trimethyllysine; alternate mark. K10 carries the N6,N6-dimethyllysine; alternate modification. At K10 the chain carries N6-(2-hydroxyisobutyryl)lysine; alternate. Residue K10 is modified to N6-(beta-hydroxybutyryl)lysine; alternate. At K10 the chain carries N6-acetyllysine; alternate. K10 is subject to N6-methyllysine; alternate. Residue K10 is modified to N6-lactoyllysine; alternate. Residue S11 is modified to ADP-ribosylserine; alternate. S11 is modified (phosphoserine; alternate; by AURKB, AURKC, RPS6KA3, RPS6KA4 and RPS6KA5). T12 is subject to Phosphothreonine; by PKC. K15 carries the N6-(2-hydroxyisobutyryl)lysine; alternate modification. The residue at position 15 (K15) is an N6-(beta-hydroxybutyryl)lysine; alternate. K15 is modified (N6-acetyllysine; alternate). K15 bears the N6-lactoyllysine; alternate mark. Position 15 is an N6-glutaryllysine; alternate (K15). K15 bears the N6-succinyllysine; alternate mark. R18 carries the citrulline; alternate modification. Residue R18 is modified to Asymmetric dimethylarginine; by CARM1; alternate. 2 positions are modified to N6-(2-hydroxyisobutyryl)lysine; alternate: K19 and K24. An N6-(beta-hydroxybutyryl)lysine; alternate mark is found at K19 and K24. N6-acetyllysine; alternate is present on residues K19 and K24. N6-methyllysine; alternate is present on residues K19 and K24. 2 positions are modified to N6-lactoyllysine; alternate: K19 and K24. N6-glutaryllysine; alternate occurs at positions 19 and 24. N6-butyryllysine; alternate is present on residues K19 and K24. R27 is subject to Citrulline. An N6,N6,N6-trimethyllysine; alternate modification is found at K28. K28 carries the post-translational modification N6,N6-dimethyllysine; alternate. K28 is modified (N6-(2-hydroxyisobutyryl)lysine; alternate). The residue at position 28 (K28) is an N6-acetyllysine; alternate. The residue at position 28 (K28) is an N6-methyllysine; alternate. At K28 the chain carries N6-lactoyllysine; alternate. Residue K28 is modified to N6-glutaryllysine; alternate. S29 bears the ADP-ribosylserine; alternate mark. S29 is modified (phosphoserine; alternate; by AURKB, AURKC and RPS6KA5). The residue at position 37 (K37) is an N6,N6,N6-trimethyllysine; alternate. K37 is subject to N6,N6-dimethyllysine; alternate. K37 carries the N6-(2-hydroxyisobutyryl)lysine; alternate modification. At K37 the chain carries N6-acetyllysine; alternate. Position 37 is an N6-methyllysine; alternate (K37). An N6-methyllysine modification is found at K38. Position 42 is a phosphotyrosine (Y42). K57 is modified (N6,N6,N6-trimethyllysine; alternate). K57 is subject to N6-(2-hydroxyisobutyryl)lysine; alternate. The residue at position 57 (K57) is an N6-(beta-hydroxybutyryl)lysine; alternate. Position 57 is an N6-acetyllysine; alternate (K57). K57 carries the N6-lactoyllysine; alternate modification. Position 57 is an N6-glutaryllysine; alternate (K57). An N6-succinyllysine; alternate modification is found at K57. An N6-methyllysine; by EHMT2; alternate modification is found at K57. S58 is subject to Phosphoserine. K65 and K80 each carry N6-(2-hydroxyisobutyryl)lysine; alternate. N6-methyllysine; alternate is present on residues K65 and K80. N6,N6,N6-trimethyllysine; alternate is present on K80. At K80 the chain carries N6,N6-dimethyllysine; alternate. K80 is modified (N6-acetyllysine; alternate). Residue K80 is modified to N6-lactoyllysine; alternate. N6-glutaryllysine; alternate is present on K80. At K80 the chain carries N6-succinyllysine; alternate. Residue T81 is modified to Phosphothreonine. S87 carries the post-translational modification Phosphoserine. At T108 the chain carries Phosphothreonine. 2 positions are modified to N6-acetyllysine; alternate: K116 and K123. K116 and K123 each carry N6-glutaryllysine; alternate. K123 bears the N6-(2-hydroxyisobutyryl)lysine; alternate mark. Residue K123 is modified to N6-methyllysine; alternate. K123 carries the N6-succinyllysine; alternate modification.

It belongs to the histone H3 family. In terms of assembly, the nucleosome is a histone octamer containing two molecules each of H2A, H2B, H3 and H4 assembled in one H3-H4 heterotetramer and two H2A-H2B heterodimers. The octamer wraps approximately 147 bp of DNA. Interacts with TONSL; CHAF1A and CHAF1B. In terms of processing, acetylation is generally linked to gene activation. Acetylation on Lys-10 (H3K9ac) impairs methylation at Arg-9 (H3R8me2s). Acetylation on Lys-19 (H3K18ac) and Lys-24 (H3K24ac) favors methylation at Arg-18 (H3R17me). Acetylation at Lys-123 (H3K122ac) by EP300/p300 plays a central role in chromatin structure: localizes at the surface of the histone octamer and stimulates transcription, possibly by promoting nucleosome instability. Citrullination at Arg-9 (H3R8ci) and/or Arg-18 (H3R17ci) by PADI4 impairs methylation and represses transcription. Post-translationally, asymmetric dimethylation at Arg-18 (H3R17me2a) by CARM1 is linked to gene activation. Symmetric dimethylation at Arg-9 (H3R8me2s) by PRMT5 is linked to gene repression. Asymmetric dimethylation at Arg-3 (H3R2me2a) by PRMT6 is linked to gene repression and is mutually exclusive with H3 Lys-5 methylation (H3K4me2 and H3K4me3). H3R2me2a is present at the 3' of genes regardless of their transcription state and is enriched on inactive promoters, while it is absent on active promoters. In terms of processing, methylation at Lys-5 (H3K4me), Lys-37 (H3K36me) and Lys-80 (H3K79me) are linked to gene activation. Methylation at Lys-5 (H3K4me) facilitates subsequent acetylation of H3 and H4. Methylation at Lys-80 (H3K79me) is associated with DNA double-strand break (DSB) responses and is a specific target for TP53BP1. Methylation at Lys-10 (H3K9me) and Lys-28 (H3K27me) are linked to gene repression. Methylation at Lys-10 (H3K9me) is a specific target for HP1 proteins (CBX1, CBX3 and CBX5) and prevents subsequent phosphorylation at Ser-11 (H3S10ph) and acetylation of H3 and H4. Methylation at Lys-5 (H3K4me) and Lys-80 (H3K79me) require preliminary monoubiquitination of H2B at 'Lys-120'. Methylation at Lys-10 (H3K9me) and Lys-28 (H3K27me) are enriched in inactive X chromosome chromatin. Monomethylation at Lys-57 (H3K56me1) by EHMT2/G9A in G1 phase promotes interaction with PCNA and is required for DNA replication. Phosphorylated at Thr-4 (H3T3ph) by HASPIN during prophase and dephosphorylated during anaphase. Phosphorylation at Ser-11 (H3S10ph) by AURKB is crucial for chromosome condensation and cell-cycle progression during mitosis and meiosis. In addition phosphorylation at Ser-11 (H3S10ph) by RPS6KA4 and RPS6KA5 is important during interphase because it enables the transcription of genes following external stimulation, like mitogens, stress, growth factors or UV irradiation and result in the activation of genes, such as c-fos and c-jun. Phosphorylation at Ser-11 (H3S10ph), which is linked to gene activation, prevents methylation at Lys-10 (H3K9me) but facilitates acetylation of H3 and H4. Phosphorylation at Ser-11 (H3S10ph) by AURKB mediates the dissociation of HP1 proteins (CBX1, CBX3 and CBX5) from heterochromatin. Phosphorylation at Ser-11 (H3S10ph) is also an essential regulatory mechanism for neoplastic cell transformation. Phosphorylated at Ser-29 (H3S28ph) by MAP3K20 isoform 1, RPS6KA5 or AURKB during mitosis or upon ultraviolet B irradiation. Phosphorylation at Thr-7 (H3T6ph) by PRKCB is a specific tag for epigenetic transcriptional activation that prevents demethylation of Lys-5 (H3K4me) by LSD1/KDM1A. At centromeres, specifically phosphorylated at Thr-12 (H3T11ph) from prophase to early anaphase, by DAPK3 and PKN1. Phosphorylation at Thr-12 (H3T11ph) by PKN1 or isoform M2 of PKM (PKM2) is a specific tag for epigenetic transcriptional activation that promotes demethylation of Lys-10 (H3K9me) by KDM4C/JMJD2C. Phosphorylation at Tyr-42 (H3Y41ph) by JAK2 promotes exclusion of CBX5 (HP1 alpha) from chromatin. Post-translationally, ubiquitinated. In terms of processing, lysine deamination at Lys-5 (H3K4all) to form allysine is mediated by LOXL2. Allysine formation by LOXL2 only takes place on H3K4me3 and results in gene repression. Butyrylation of histones marks active promoters and competes with histone acetylation. It is present during late spermatogenesis. Post-translationally, succinylation at Lys-80 (H3K79succ) by KAT2A takes place with a maximum frequency around the transcription start sites of genes. It gives a specific tag for epigenetic transcription activation. Desuccinylation at Lys-123 (H3K122succ) by SIRT7 in response to DNA damage promotes chromatin condensation and double-strand breaks (DSBs) repair. In terms of processing, serine ADP-ribosylation constitutes the primary form of ADP-ribosylation of proteins in response to DNA damage. Serine ADP-ribosylation at Ser-11 (H3S10ADPr) is mutually exclusive with phosphorylation at Ser-11 (H3S10ph) and impairs acetylation at Lys-10 (H3K9ac). As to expression, expressed in testicular cells.

Its subcellular location is the nucleus. It localises to the chromosome. Core component of nucleosome. Nucleosomes wrap and compact DNA into chromatin, limiting DNA accessibility to the cellular machineries which require DNA as a template. Histones thereby play a central role in transcription regulation, DNA repair, DNA replication and chromosomal stability. DNA accessibility is regulated via a complex set of post-translational modifications of histones, also called histone code, and nucleosome remodeling. The polypeptide is Histone H3.1t (Homo sapiens (Human)).